A 179-amino-acid polypeptide reads, in one-letter code: MSRIGKIPVQVPSGVDVDIADRVVTVKGPKGTLTHRVPAPIVVARGDDGALVVTRPDDERTSRSLHGLTRTLLANLVTGVTQGYQKNLEIVGTGYRVTAKGSSLEFALGFSHPVTVSAPEGITFAVESPTKFSVAGIDKQQVGEVAANIRKIRKPEPYKGKGVRYAGEQVRRKVGKAGK.

Belongs to the universal ribosomal protein uL6 family. Part of the 50S ribosomal subunit.

Its function is as follows. This protein binds to the 23S rRNA, and is important in its secondary structure. It is located near the subunit interface in the base of the L7/L12 stalk, and near the tRNA binding site of the peptidyltransferase center. The protein is Large ribosomal subunit protein uL6 of Beutenbergia cavernae (strain ATCC BAA-8 / DSM 12333 / CCUG 43141 / JCM 11478 / NBRC 16432 / NCIMB 13614 / HKI 0122).